The chain runs to 522 residues: Transactivator/viroplasmin protein (522 aa).

Over residues 111–126 (QGIQIPQKSEPNSSVA) the composition is skewed to polar residues. 2 disordered regions span residues 111–133 (QGIQ…AESG) and 491–522 (SADS…KASG).

It belongs to the caulimoviridae viroplasmin family.

The protein localises to the host cytoplasm. In terms of biological role, enhances the ribosomal termination-reinitiation event leading to the translation of major open reading frames on the polycistronic viral RNAs. The chain is Transactivator/viroplasmin protein from Arabidopsis thaliana (Mouse-ear cress).